The chain runs to 214 residues: Adenylate kinase (214 aa).

An ATP-binding site is contributed by 10–15; sequence GAGKGT. An NMP region spans residues 30–59; sequence STGDMFREAVASKSELGKKVEEILKRGDLV. AMP-binding positions include Thr-31, Arg-36, 57–59, 85–88, and Gln-92; these read DLV and GFPR. Residues 126 to 163 form an LID region; the sequence is NRRICSNCGKIYNLITLPPKVDGKCDVCGGTLYQREDD. Arg-127 contributes to the ATP binding site. Positions 130 and 133 each coordinate Zn(2+). 136–137 is an ATP binding site; it reads IY. The Zn(2+) site is built by Cys-150 and Cys-153. AMP-binding residues include Arg-160 and Arg-171. Position 199 (Leu-199) interacts with ATP.

The protein belongs to the adenylate kinase family. As to quaternary structure, monomer.

The protein resides in the cytoplasm. The enzyme catalyses AMP + ATP = 2 ADP. The protein operates within purine metabolism; AMP biosynthesis via salvage pathway; AMP from ADP: step 1/1. Its function is as follows. Catalyzes the reversible transfer of the terminal phosphate group between ATP and AMP. Plays an important role in cellular energy homeostasis and in adenine nucleotide metabolism. This chain is Adenylate kinase, found in Thermosipho africanus (strain TCF52B).